The following is a 455-amino-acid chain: Post-transcriptional regulator MTA (455 aa).

A disordered region spans residues 17–163; that stretch reads DSVSSSEFDE…QVNCQRQDDD (147 aa). The span at 23–42 shows a compositional bias: acidic residues; it reads EFDESRDDETDAPTLEDEQL. Over residues 88 to 98 the composition is skewed to low complexity; it reads SPLSRPRSPSP. Short sequence motifs (nuclear localization signal) lie at residues 101–107, 121–130, and 143–152; these read RYGKKIK, KRPRRRPRDR, and RAAPKRATRR. Zn(2+) contacts are provided by Cys333, His423, Cys427, and Cys432. A CHC2-type zinc finger spans residues 333 to 432; the sequence is CVFDKQSELA…HHSLCRNSEC (100 aa).

This sequence belongs to the HHV-1 ICP27 protein family. As to quaternary structure, homodimer. Homodimerization is required for transactivation. Interacts with host ALYREF. Associates in a complex with RNA, and host export factors NXF1/TAP and ALYREF; these interactions allow nuclear export of viral transcripts. Interacts with protein K-bZIP/K8; this interaction promotes viral gene expression during lytic infection. Interacts with host PABPC1. Interacts with host AGO2 and TNRC6A; these interactions inhibit host P-body formation. Interacts with PRKRA and EIF2AK2/PKR; these interactions inhibit host stress granule formation. In terms of processing, proteolytically cleaved by host caspase-7 (CASP7), leading to its inactivation, thereby preventing expression of viral lytic genes.

It localises to the host cytoplasm. The protein localises to the host nucleus. Post-transcriptional regulator that plays an essential role in the expression of viral lytic genes and productive viral replication. Possesses numerous activities that promote the expression of viral genes including enhancement of RNA stability, promotion of RNA splicing and stimulation of protein translation often via its ability to interact with different cellular cofactors. Stabilizes polyadenylated nuclear (PAN) RNA by cooperative binding to a 9-nt core of the MRE (MTA responsive element) together with host PABPC1. Functions as a viral splicing factor and promotes expression of intron-containing viral lytic genes. Protects viral transcripts from specific nuclear RNA decay pathways by preventing host MTREX recruitment that promotes unwinding and degradation of structured RNA substrates. Plays a role in the inhibition of host P-body formation by altering the scaffolding activity of TNRC6A at the initial stage thereby enhancing virus production. Also inhibits host stress granule formation by blocking autophosphorylation of EIF2AK2/PKR and its subsequent binding to dsRNA. In Human herpesvirus 8 type P (isolate GK18) (HHV-8), this protein is Post-transcriptional regulator MTA.